We begin with the raw amino-acid sequence, 122 residues long: uncharacterized protein (122 aa).

It localises to the mitochondrion. This is an uncharacterized protein from Arabidopsis thaliana (Mouse-ear cress).